A 118-amino-acid chain; its full sequence is Protein TusC (118 aa).

The protein belongs to the DsrF/TusC family. In terms of assembly, heterohexamer, formed by a dimer of trimers. The hexameric TusBCD complex contains 2 copies each of TusB, TusC and TusD. The TusBCD complex interacts with TusE.

The protein resides in the cytoplasm. Its function is as follows. Part of a sulfur-relay system required for 2-thiolation of 5-methylaminomethyl-2-thiouridine (mnm(5)s(2)U) at tRNA wobble positions. The chain is Protein TusC from Salmonella arizonae (strain ATCC BAA-731 / CDC346-86 / RSK2980).